The chain runs to 116 residues: Cell cycle protein GpsB (116 aa).

The stretch at 32 to 69 (LDDVIKDYETYSALVKELREENSRLKQELSKRMQEAPN) forms a coiled coil. Residues 57-78 (KQELSKRMQEAPNSTASQVHQS) are disordered. The segment covering 67–78 (APNSTASQVHQS) has biased composition (polar residues).

This sequence belongs to the GpsB family. In terms of assembly, forms polymers through the coiled coil domains. Interacts with PBP1, MreC and EzrA.

It is found in the cytoplasm. Its function is as follows. Divisome component that associates with the complex late in its assembly, after the Z-ring is formed, and is dependent on DivIC and PBP2B for its recruitment to the divisome. Together with EzrA, is a key component of the system that regulates PBP1 localization during cell cycle progression. Its main role could be the removal of PBP1 from the cell pole after pole maturation is completed. Also contributes to the recruitment of PBP1 to the division complex. Not essential for septum formation. This is Cell cycle protein GpsB from Streptococcus gordonii (strain Challis / ATCC 35105 / BCRC 15272 / CH1 / DL1 / V288).